The sequence spans 842 residues: MVAFTPEEVRNLMGKPSNVRNMSVIAHVDHGKSTLTDSLVQKAGIISAAKAGDARFMDTRADEQERGVTIKSTAISLFAEMTDDDMKDMKEPADGTDFLVNLIDSPGHVDFSSEVTAALRVTDGALVVVDTIEGVCVQTETVLRQALGERIRPVVVVNKVDRALLELQISQEELYQNFARVVESVNVVISTYYDKVLGDCQVFPDKGTVAFASGLHGWAFTVRQFANRYAKKFGIDRNKMMQRLWGENYFNPKTKKWSKSATDANGNSNQRAFNMFILDPIYRIFDAVMNSRKDEVFTLLSKLEVTIKPDEKELEGKALLKVVMRKFLPAADALMEMIVLHLPSPKTAQQYRAETLYEGPMDDECAVGIRNCDANAPLMIYVSKMVPTSDRGRFYAFGRVFSGTVRSGLKVRIQGPNYVPGKKDDLFIKAIQRTVLMMGSRIEPIEDCPAGNIIGLVGVDQFLVKSGTLTTSEVAHNMKVMKFSVSPVVQVAVEVKNGNDLPKLVEGLKRLSKSDPCVLCTTSESGEHIVAGAGELHLEICLKDLQEDHAGIPLKISPPVVSYRESVSEPSSMTALSKSPNKHNRIFMTAEPMSEELSVAIETGHVNPRDDFKVRARIMADEFGWDVTDARKIWCFGPDTTGANVVVDQTKAVAYLNEIKDSVVAAFAWASKEGPMFEENLRSCRFNILDVVLHADAIHRGGGQIIPTARRVVYASTLLASPIIQEPVFLVEIQVSENAMGGIYSVLNKKRGHVFSEEQRVGTPLYNIKAYLPVNESFGFTGELRQATAGQAFPQLVFDHWSPMSGDPLDPTSKPGQIVCEARKRKGLKENVPDYTEYYDRL.

A tr-type G domain is found at 17-253 (SNVRNMSVIA…LWGENYFNPK (237 aa)). GTP is bound by residues 26–33 (AHVDHGKS), 104–108 (DSPGH), and 158–161 (NKVD). Ser-568 carries the phosphoserine modification. The residue at position 574 (Thr-574) is a Phosphothreonine. A Diphthamide modification is found at His-699.

Belongs to the TRAFAC class translation factor GTPase superfamily. Classic translation factor GTPase family. EF-G/EF-2 subfamily.

The protein localises to the cytoplasm. Its function is as follows. Catalyzes the GTP-dependent ribosomal translocation step during translation elongation. During this step, the ribosome changes from the pre-translocational (PRE) to the post-translocational (POST) state as the newly formed A-site-bound peptidyl-tRNA and P-site-bound deacylated tRNA move to the P and E sites, respectively. Catalyzes the coordinated movement of the two tRNA molecules, the mRNA and conformational changes in the ribosome. The protein is Elongation factor 2 (eft201) of Schizosaccharomyces pombe (strain 972 / ATCC 24843) (Fission yeast).